The chain runs to 216 residues: Adenylate kinase (216 aa).

10 to 15 (GAGKGT) contributes to the ATP binding site. The interval 30-59 (STGDIFRKNIKEGTELGKKAKEYMDQGLLV) is NMP. AMP-binding positions include Thr31, Arg36, 57–59 (LLV), 85–88 (GFPR), and Gln92. An LID region spans residues 126–163 (GRRICKSCGATYHVEFNPPKVEGVCDVCQGELYQRADD). Arg127 contacts ATP. Residues Cys130 and Cys133 each coordinate Zn(2+). 136 to 137 (TY) serves as a coordination point for ATP. Zn(2+) contacts are provided by Cys150 and Cys153. The AMP site is built by Arg160 and Arg171. Gln199 is a binding site for ATP.

It belongs to the adenylate kinase family. Monomer.

Its subcellular location is the cytoplasm. It carries out the reaction AMP + ATP = 2 ADP. The protein operates within purine metabolism; AMP biosynthesis via salvage pathway; AMP from ADP: step 1/1. Its function is as follows. Catalyzes the reversible transfer of the terminal phosphate group between ATP and AMP. Plays an important role in cellular energy homeostasis and in adenine nucleotide metabolism. The polypeptide is Adenylate kinase (Clostridioides difficile (strain 630) (Peptoclostridium difficile)).